The following is a 1076-amino-acid chain: Carbamoyl phosphate synthase large chain (1076 aa).

Positions 1-403 (MPKRTDIQSI…SLQKALRGLE (403 aa)) are carboxyphosphate synthetic domain. Residues R129, R169, G175, G176, E208, L210, E215, G241, I242, H243, Q285, and E299 each coordinate ATP. The ATP-grasp 1 domain occupies 133–328 (DKAMKSIGLE…IAKVAAKLAV (196 aa)). Q285, E299, and N301 together coordinate Mg(2+). The Mn(2+) site is built by Q285, E299, and N301. Residues 404–553 (VGAAGLDEKV…YSTYDEECEA (150 aa)) are oligomerization domain. Positions 554–935 (NPTDKDKIMV…AYAKAELGCG (382 aa)) are carbamoyl phosphate synthetic domain. Residues 678–869 (QQAVQRLGLK…LAKIAARVMV (192 aa)) enclose the ATP-grasp 2 domain. ATP is bound by residues R714, R753, L755, E760, G785, V786, H787, S788, Q828, and E840. Residues Q828, E840, and N842 each coordinate Mg(2+). Mn(2+) is bound by residues Q828, E840, and N842. Residues 936-1076 (SVYPEGGRAL…LHARVKANQA (141 aa)) form the MGS-like domain. Residues 936–1076 (SVYPEGGRAL…LHARVKANQA (141 aa)) are allosteric domain.

The protein belongs to the CarB family. As to quaternary structure, composed of two chains; the small (or glutamine) chain promotes the hydrolysis of glutamine to ammonia, which is used by the large (or ammonia) chain to synthesize carbamoyl phosphate. Tetramer of heterodimers (alpha,beta)4. Mg(2+) is required as a cofactor. Requires Mn(2+) as cofactor.

It carries out the reaction hydrogencarbonate + L-glutamine + 2 ATP + H2O = carbamoyl phosphate + L-glutamate + 2 ADP + phosphate + 2 H(+). The enzyme catalyses hydrogencarbonate + NH4(+) + 2 ATP = carbamoyl phosphate + 2 ADP + phosphate + 2 H(+). It functions in the pathway amino-acid biosynthesis; L-arginine biosynthesis; carbamoyl phosphate from bicarbonate: step 1/1. It participates in pyrimidine metabolism; UMP biosynthesis via de novo pathway; (S)-dihydroorotate from bicarbonate: step 1/3. Its function is as follows. Large subunit of the glutamine-dependent carbamoyl phosphate synthetase (CPSase). CPSase catalyzes the formation of carbamoyl phosphate from the ammonia moiety of glutamine, carbonate, and phosphate donated by ATP, constituting the first step of 2 biosynthetic pathways, one leading to arginine and/or urea and the other to pyrimidine nucleotides. The large subunit (synthetase) binds the substrates ammonia (free or transferred from glutamine from the small subunit), hydrogencarbonate and ATP and carries out an ATP-coupled ligase reaction, activating hydrogencarbonate by forming carboxy phosphate which reacts with ammonia to form carbamoyl phosphate. The protein is Carbamoyl phosphate synthase large chain of Vibrio cholerae serotype O1 (strain ATCC 39315 / El Tor Inaba N16961).